Here is a 436-residue protein sequence, read N- to C-terminus: F-box/LRR-repeat protein At2g40920 (436 aa).

In terms of domain architecture, F-box spans 48-98; the sequence is EYLLQNFDLDHVMEILMRFPLTSLTRFKCVSKQWSSLISSRYFCNLLYTTV. LRR repeat units lie at residues 276-301 and 393-416; these read NCVV…IHLD and YYNL…WFDK.

This Arabidopsis thaliana (Mouse-ear cress) protein is F-box/LRR-repeat protein At2g40920.